The following is a 155-amino-acid chain: Ribosomal RNA large subunit methyltransferase H (155 aa).

S-adenosyl-L-methionine-binding positions include Leu-72, Gly-103, and 122–127; that span reads LSDLTL.

Belongs to the RNA methyltransferase RlmH family. As to quaternary structure, homodimer.

It is found in the cytoplasm. The enzyme catalyses pseudouridine(1915) in 23S rRNA + S-adenosyl-L-methionine = N(3)-methylpseudouridine(1915) in 23S rRNA + S-adenosyl-L-homocysteine + H(+). Its function is as follows. Specifically methylates the pseudouridine at position 1915 (m3Psi1915) in 23S rRNA. This Albidiferax ferrireducens (strain ATCC BAA-621 / DSM 15236 / T118) (Rhodoferax ferrireducens) protein is Ribosomal RNA large subunit methyltransferase H.